A 460-amino-acid chain; its full sequence is ATP synthase subunit beta (460 aa).

Residue 150–157 coordinates ATP; it reads GGAGVGKT.

The protein belongs to the ATPase alpha/beta chains family. F-type ATPases have 2 components, CF(1) - the catalytic core - and CF(0) - the membrane proton channel. CF(1) has five subunits: alpha(3), beta(3), gamma(1), delta(1), epsilon(1). CF(0) has three main subunits: a(1), b(2) and c(9-12). The alpha and beta chains form an alternating ring which encloses part of the gamma chain. CF(1) is attached to CF(0) by a central stalk formed by the gamma and epsilon chains, while a peripheral stalk is formed by the delta and b chains.

The protein resides in the cell inner membrane. It carries out the reaction ATP + H2O + 4 H(+)(in) = ADP + phosphate + 5 H(+)(out). Functionally, produces ATP from ADP in the presence of a proton gradient across the membrane. The catalytic sites are hosted primarily by the beta subunits. In Photorhabdus laumondii subsp. laumondii (strain DSM 15139 / CIP 105565 / TT01) (Photorhabdus luminescens subsp. laumondii), this protein is ATP synthase subunit beta.